The sequence spans 510 residues: Cytochrome P450 monooxygenase BOT1 (510 aa).

A helical membrane pass occupies residues 16 to 36; it reads PLAWAALILASFTLYSVQLVV. Cys454 is a binding site for heme. An N-linked (GlcNAc...) asparagine glycan is attached at Asn476.

The protein belongs to the cytochrome P450 family. Heme serves as cofactor.

It localises to the membrane. It participates in secondary metabolite biosynthesis. In terms of biological role, cytochrome P450 monooxygenase; part of the gene cluster that mediates the biosynthesis of botrydial. Botrydial is necessary for colonization of plant tissue by the T4 strain. It is a strain-dependent virulence factor since highly aggressive strains like SAS56 or B05 still retain substantial virulence when botrydial synthesis is impaired, since they produce also botcinic acid. The first step of botrydial biosynthesis is performed by the sesquiterpene synthase BOT2 which catalyzes the cyclization of farnesyl diphosphate (FPP) to presilphiperfolan-8-beta-ol (PSP). The cytochrome P450 monooxygenase BOT4 then catalyzes the hydroxylation at C-4 to give a probotryane intermediate. Acetylation of the hydroxyl at C-4 is carried out by the acetyltransferase BOT5, followed by the combined action of the P450 monooxygenases BOT3 and BOT1, to yield finally the glycol, via the regio- and stereospecific hydroxylations at C-10 and C-15 of the probotryane intermediates, respectively. The cleavage of the C10-C15 bond of probotryane skeleton is an intriguing and chemically important reaction, which could be mediated by some of the monooxygenases or by a combination of them. It is possible that either BOT3 or BOT1 would oxidize either the 10- or the 15-hydroxy group to the hydroperoxide derivative, which would then undergo heterolytic fragmentation to give the dialdehyde botrydial. Finally, the dehydrogenase BOT7 might be involved in the conversion of botrydial to dihydrobotrydial. In Botryotinia fuckeliana (Noble rot fungus), this protein is Cytochrome P450 monooxygenase BOT1.